A 183-amino-acid chain; its full sequence is Adenylate kinase (183 aa).

Position 12-17 (12-17 (GAGKGT)) interacts with ATP. Residues 32-61 (STGDLLRSEVAAGSELGKEAEAVMNRGELV) form an NMP region. AMP contacts are provided by residues Thr33, Arg38, 59-61 (ELV), 86-89 (GFPR), and Gln93. The interval 127 to 133 (SRGRADD) is LID. Arg128 serves as a coordination point for ATP. Arg130 and Arg141 together coordinate AMP. Gly169 contributes to the ATP binding site.

The protein belongs to the adenylate kinase family. As to quaternary structure, monomer.

It is found in the cytoplasm. It catalyses the reaction AMP + ATP = 2 ADP. The protein operates within purine metabolism; AMP biosynthesis via salvage pathway; AMP from ADP: step 1/1. Its function is as follows. Catalyzes the reversible transfer of the terminal phosphate group between ATP and AMP. Plays an important role in cellular energy homeostasis and in adenine nucleotide metabolism. The sequence is that of Adenylate kinase from Synechococcus sp. (strain CC9902).